Consider the following 178-residue polypeptide: Large ribosomal subunit protein uL6 (178 aa).

This sequence belongs to the universal ribosomal protein uL6 family. In terms of assembly, part of the 50S ribosomal subunit.

In terms of biological role, this protein binds to the 23S rRNA, and is important in its secondary structure. It is located near the subunit interface in the base of the L7/L12 stalk, and near the tRNA binding site of the peptidyltransferase center. The chain is Large ribosomal subunit protein uL6 from Maridesulfovibrio salexigens (strain ATCC 14822 / DSM 2638 / NCIMB 8403 / VKM B-1763) (Desulfovibrio salexigens).